We begin with the raw amino-acid sequence, 162 residues long: SsrA-binding protein (162 aa).

The span at 137-154 shows a compositional bias: basic and acidic residues; the sequence is HDKREDTKAREWDREKAR. Residues 137–162 form a disordered region; sequence HDKREDTKAREWDREKARIMKNKHRG.

This sequence belongs to the SmpB family.

It is found in the cytoplasm. Its function is as follows. Required for rescue of stalled ribosomes mediated by trans-translation. Binds to transfer-messenger RNA (tmRNA), required for stable association of tmRNA with ribosomes. tmRNA and SmpB together mimic tRNA shape, replacing the anticodon stem-loop with SmpB. tmRNA is encoded by the ssrA gene; the 2 termini fold to resemble tRNA(Ala) and it encodes a 'tag peptide', a short internal open reading frame. During trans-translation Ala-aminoacylated tmRNA acts like a tRNA, entering the A-site of stalled ribosomes, displacing the stalled mRNA. The ribosome then switches to translate the ORF on the tmRNA; the nascent peptide is terminated with the 'tag peptide' encoded by the tmRNA and targeted for degradation. The ribosome is freed to recommence translation, which seems to be the essential function of trans-translation. This is SsrA-binding protein from Aeromonas salmonicida (strain A449).